Consider the following 103-residue polypeptide: Co-chaperonin GroES (103 aa).

This sequence belongs to the GroES chaperonin family. As to quaternary structure, heptamer of 7 subunits arranged in a ring. Interacts with the chaperonin GroEL.

Its subcellular location is the cytoplasm. Its function is as follows. Together with the chaperonin GroEL, plays an essential role in assisting protein folding. The GroEL-GroES system forms a nano-cage that allows encapsulation of the non-native substrate proteins and provides a physical environment optimized to promote and accelerate protein folding. GroES binds to the apical surface of the GroEL ring, thereby capping the opening of the GroEL channel. This Dinoroseobacter shibae (strain DSM 16493 / NCIMB 14021 / DFL 12) protein is Co-chaperonin GroES.